Here is a 355-residue protein sequence, read N- to C-terminus: S-adenosylmethionine:tRNA ribosyltransferase-isomerase (355 aa).

The protein belongs to the QueA family. In terms of assembly, monomer.

It localises to the cytoplasm. It carries out the reaction 7-aminomethyl-7-carbaguanosine(34) in tRNA + S-adenosyl-L-methionine = epoxyqueuosine(34) in tRNA + adenine + L-methionine + 2 H(+). Its pathway is tRNA modification; tRNA-queuosine biosynthesis. Functionally, transfers and isomerizes the ribose moiety from AdoMet to the 7-aminomethyl group of 7-deazaguanine (preQ1-tRNA) to give epoxyqueuosine (oQ-tRNA). The chain is S-adenosylmethionine:tRNA ribosyltransferase-isomerase from Aeromonas salmonicida (strain A449).